The chain runs to 526 residues: Fumitremorgin C synthase (526 aa).

A helical membrane pass occupies residues 4 to 24 (LPLSPAVLFLIIVLPILYLWI). Cysteine 443 provides a ligand contact to heme.

It belongs to the cytochrome P450 family. Requires heme as cofactor.

It is found in the membrane. It catalyses the reaction tryprostatin A + reduced [NADPH--hemoprotein reductase] + O2 = fumitremorgin C + oxidized [NADPH--hemoprotein reductase] + 2 H2O + H(+). It participates in mycotoxin biosynthesis. In terms of biological role, cytochrome P450 monooxygenase; part of the gene cluster that mediates the biosynthesis of fumitremorgins, indole alkaloids that carry not only intriguing chemical structures, but also interesting biological and pharmacological activities. The biosynthesis of fumitremorgin-type alkaloids begins by condensation of the two amino acids L-tryptophan and L-proline to brevianamide F, catalyzed by the non-ribosomal peptide synthetase ftmA. Brevianamide F is then prenylated by the prenyltransferase ftmPT1/ftmB in the presence of dimethylallyl diphosphate, resulting in the formation of tryprostatin B. The three cytochrome P450 monooxygenases, ftmP450-1/ftmC, ftmP450-2/ftmE and ftmP450-3/FtmG, are responsible for the conversion of tryprostatin B to 6-hydroxytryprostatin B, tryprostatin A to fumitremorgin C and fumitremorgin C to 12,13-dihydroxyfumitremorgin C, respectively. The putative methyltransferase ftmMT/ftmD is expected for the conversion of 6-hydroxytryprostatin B to tryprostatin A. FtmPT2/FtmH catalyzes the prenylation of 12,13-dihydroxyfumitre-morgin C in the presence of dimethylallyl diphosphate, resulting in the formation of fumitremorgin B. Fumitremorgin B is further converted to verruculogen by ftmOx1/ftmF via the insertion of an endoperoxide bond between the two prenyl moieties. In some fungal species, verruculogen is further converted to fumitremorgin A, but the enzymes involved in this step have not been identified yet. The sequence is that of Fumitremorgin C synthase from Aspergillus fumigatus (Neosartorya fumigata).